The chain runs to 113 residues: Hydrogenase maturation factor HypA (113 aa).

Residue H2 coordinates Ni(2+). Zn(2+)-binding residues include C73, C76, C89, and C92.

This sequence belongs to the HypA/HybF family.

Its function is as follows. Involved in the maturation of [NiFe] hydrogenases. Required for nickel insertion into the metal center of the hydrogenase. This chain is Hydrogenase maturation factor HypA, found in Chlorobaculum parvum (strain DSM 263 / NCIMB 8327) (Chlorobium vibrioforme subsp. thiosulfatophilum).